We begin with the raw amino-acid sequence, 216 residues long: 2-hydroxy-3-keto-5-methylthiopentenyl-1-phosphate phosphatase (216 aa).

It belongs to the HAD-like hydrolase superfamily. MtnX family.

The enzyme catalyses 2-hydroxy-5-methylsulfanyl-3-oxopent-1-enyl phosphate + H2O = 1,2-dihydroxy-5-(methylsulfanyl)pent-1-en-3-one + phosphate. It functions in the pathway amino-acid biosynthesis; L-methionine biosynthesis via salvage pathway; L-methionine from S-methyl-5-thio-alpha-D-ribose 1-phosphate: step 4/6. Its function is as follows. Dephosphorylates 2-hydroxy-3-keto-5-methylthiopentenyl-1-phosphate (HK-MTPenyl-1-P) yielding 1,2-dihydroxy-3-keto-5-methylthiopentene (DHK-MTPene). The sequence is that of 2-hydroxy-3-keto-5-methylthiopentenyl-1-phosphate phosphatase from Exiguobacterium sp. (strain ATCC BAA-1283 / AT1b).